Reading from the N-terminus, the 322-residue chain is Homoserine kinase (322 aa).

107 to 117 (PLSSGMGGSAA) lines the ATP pocket.

Belongs to the GHMP kinase family. Homoserine kinase subfamily.

The protein resides in the cytoplasm. It carries out the reaction L-homoserine + ATP = O-phospho-L-homoserine + ADP + H(+). Its pathway is amino-acid biosynthesis; L-threonine biosynthesis; L-threonine from L-aspartate: step 4/5. Its function is as follows. Catalyzes the ATP-dependent phosphorylation of L-homoserine to L-homoserine phosphate. This Xylella fastidiosa (strain M23) protein is Homoserine kinase.